The chain runs to 278 residues: MTVLHSVDFFPSGKAPVAIEPRLPQAAFPEHHHDFHEIVIVEHGTGIHVFNGQPYTISGGTVCFVRDHDRHLYEHTDNLCLTNVLWRSPDAFQFLAGLDQLLPQEQDGYYPSHWRVNQSVLQQVRQLVGLMERAGDGMDAPAVANREILFMQLLVLLRRSSLMEGATNNDAKLNQLMAWLEDHFAEEVCWEAVAEQFSLSLRTLHRQLKQHTGLTPQRYLNRLRLIKARHLLRHSDHSVTEIAYRCGFGDSNHFSTLFRREFNWSPRDIRQGRDAIIQ.

The HTH araC/xylS-type domain maps to 174 to 272; it reads NQLMAWLEDH…NWSPRDIRQG (99 aa). 2 consecutive DNA-binding regions (H-T-H motif) follow at residues 191 to 212 and 239 to 262; these read EAVA…KQHT and VTEI…RREF.

In terms of assembly, binds DNA as a dimer.

It is found in the cytoplasm. Its function is as follows. Activates expression of the rhaBAD and rhaT operons. This chain is HTH-type transcriptional activator RhaS, found in Salmonella enteritidis PT4 (strain P125109).